The sequence spans 747 residues: WD repeat-containing protein 91 (747 aa).

Residues 183–227 are a coiled coil; the sequence is QRTNQVQEENEVLRQKLFALQAEVHRLKKEEQQQEEAAALVQHKL. S256 is subject to Phosphoserine. Residues 265–278 show a composition bias toward low complexity; it reads LLPQSKKSPSRLSP. The tract at residues 265–358 is disordered; it reads LLPQSKKSPS…SQTQCAEKKL (94 aa). The segment covering 283-299 has biased composition (polar residues); the sequence is PQAQSSAKKDTFSSQAT. S288 carries the phosphoserine modification. Over residues 332–343 the composition is skewed to basic and acidic residues; that stretch reads RLQDHGKERREL. The span at 344–353 shows a compositional bias: polar residues; it reads LSTSSSQTQC. WD repeat units follow at residues 406-445, 448-488, 511-555, 560-599, 602-641, 664-702, and 709-747; these read EHHS…QTKA, ISKS…NLCE, VCSA…QQLQ, PEPI…CAMS, AHCG…LKVS, VQVP…KVLE, and GHRA…AHKL.

The protein belongs to the WD repeat WDR91 family. In terms of assembly, interacts with WDR81; involved in early to late endosome cargo transport. Interacts with BECN1; negatively regulates the PI3 kinase/PI3K activity associated with endosomal membranes.

It localises to the early endosome membrane. It is found in the late endosome membrane. Functions as a negative regulator of the PI3 kinase/PI3K activity associated with endosomal membranes via BECN1, a core subunit of the PI3K complex. By modifying the phosphatidylinositol 3-phosphate/PtdInsP3 content of endosomal membranes may regulate endosome fusion, recycling, sorting and early to late endosome transport. It is for instance, required for the delivery of cargos like BST2/tetherin from early to late endosome and thereby participates indirectly to their degradation by the lysosome. May play a role in meiosis. This Rattus norvegicus (Rat) protein is WD repeat-containing protein 91.